Here is a 261-residue protein sequence, read N- to C-terminus: Cytochrome c oxidase subunit 3 (261 aa).

Topologically, residues 1-15 (MTHQTHAYHTVNPSP) are mitochondrial matrix. Residues 16-34 (WPLTGALSALLMTSGLIMW) traverse the membrane as a helical segment. The Mitochondrial intermembrane segment spans residues 35 to 40 (FHFNSP). Residues 41–66 (LLLVLGLTTNFLTMYQWWRDIIREST) form a helical membrane-spanning segment. Residues 67-72 (FQGHHT) are Mitochondrial matrix-facing. Residues 73 to 105 (TIVQKGLRYGMILFIVSEVFFFAGFFWAFYHSS) traverse the membrane as a helical segment. Residues 106-128 (LAPTPELGGCWPPTGINPLNPLE) lie on the Mitochondrial intermembrane side of the membrane. The chain crosses the membrane as a helical span at residues 129-152 (VPLLNTSVLLASGVSITWAHHSLM). Residues 153 to 155 (EGH) lie on the Mitochondrial matrix side of the membrane. The chain crosses the membrane as a helical span at residues 156–183 (RKHMLQALFITIALGVYFTLLQASEYYE). At 184 to 190 (APFTISD) the chain is on the mitochondrial intermembrane side. A helical transmembrane segment spans residues 191-223 (GIYGSTFFVATGFHGLHVIIGSSFLIVCFMRQL). At 224 to 232 (KFHFTSSHH) the chain is on the mitochondrial matrix side. A helical transmembrane segment spans residues 233–256 (FGFEAAAWYWHFVDVVWLFLYVSI). At 257–261 (YWWGS) the chain is on the mitochondrial intermembrane side.

This sequence belongs to the cytochrome c oxidase subunit 3 family. Component of the cytochrome c oxidase (complex IV, CIV), a multisubunit enzyme composed of 14 subunits. The complex is composed of a catalytic core of 3 subunits MT-CO1, MT-CO2 and MT-CO3, encoded in the mitochondrial DNA, and 11 supernumerary subunits COX4I, COX5A, COX5B, COX6A, COX6B, COX6C, COX7A, COX7B, COX7C, COX8 and NDUFA4, which are encoded in the nuclear genome. The complex exists as a monomer or a dimer and forms supercomplexes (SCs) in the inner mitochondrial membrane with NADH-ubiquinone oxidoreductase (complex I, CI) and ubiquinol-cytochrome c oxidoreductase (cytochrome b-c1 complex, complex III, CIII), resulting in different assemblies (supercomplex SCI(1)III(2)IV(1) and megacomplex MCI(2)III(2)IV(2)).

The protein localises to the mitochondrion inner membrane. It carries out the reaction 4 Fe(II)-[cytochrome c] + O2 + 8 H(+)(in) = 4 Fe(III)-[cytochrome c] + 2 H2O + 4 H(+)(out). In terms of biological role, component of the cytochrome c oxidase, the last enzyme in the mitochondrial electron transport chain which drives oxidative phosphorylation. The respiratory chain contains 3 multisubunit complexes succinate dehydrogenase (complex II, CII), ubiquinol-cytochrome c oxidoreductase (cytochrome b-c1 complex, complex III, CIII) and cytochrome c oxidase (complex IV, CIV), that cooperate to transfer electrons derived from NADH and succinate to molecular oxygen, creating an electrochemical gradient over the inner membrane that drives transmembrane transport and the ATP synthase. Cytochrome c oxidase is the component of the respiratory chain that catalyzes the reduction of oxygen to water. Electrons originating from reduced cytochrome c in the intermembrane space (IMS) are transferred via the dinuclear copper A center (CU(A)) of subunit 2 and heme A of subunit 1 to the active site in subunit 1, a binuclear center (BNC) formed by heme A3 and copper B (CU(B)). The BNC reduces molecular oxygen to 2 water molecules using 4 electrons from cytochrome c in the IMS and 4 protons from the mitochondrial matrix. The sequence is that of Cytochrome c oxidase subunit 3 (MT-CO3) from Dasypus novemcinctus (Nine-banded armadillo).